Consider the following 364-residue polypeptide: UDP-N-acetylglucosamine--N-acetylmuramyl-(pentapeptide) pyrophosphoryl-undecaprenol N-acetylglucosamine transferase (364 aa).

Residues Thr10–Gly12, Asn124, Arg165, Ser193, Ile248, and Gln293 each bind UDP-N-acetyl-alpha-D-glucosamine.

It belongs to the glycosyltransferase 28 family. MurG subfamily.

It localises to the cell inner membrane. It carries out the reaction di-trans,octa-cis-undecaprenyl diphospho-N-acetyl-alpha-D-muramoyl-L-alanyl-D-glutamyl-meso-2,6-diaminopimeloyl-D-alanyl-D-alanine + UDP-N-acetyl-alpha-D-glucosamine = di-trans,octa-cis-undecaprenyl diphospho-[N-acetyl-alpha-D-glucosaminyl-(1-&gt;4)]-N-acetyl-alpha-D-muramoyl-L-alanyl-D-glutamyl-meso-2,6-diaminopimeloyl-D-alanyl-D-alanine + UDP + H(+). Its pathway is cell wall biogenesis; peptidoglycan biosynthesis. In terms of biological role, cell wall formation. Catalyzes the transfer of a GlcNAc subunit on undecaprenyl-pyrophosphoryl-MurNAc-pentapeptide (lipid intermediate I) to form undecaprenyl-pyrophosphoryl-MurNAc-(pentapeptide)GlcNAc (lipid intermediate II). This is UDP-N-acetylglucosamine--N-acetylmuramyl-(pentapeptide) pyrophosphoryl-undecaprenol N-acetylglucosamine transferase from Geobacter sulfurreducens (strain ATCC 51573 / DSM 12127 / PCA).